The following is a 449-amino-acid chain: MSHITFDYSKVLESFAGQHEIDFLQGQVTEADKLLREGTGPGSDFLGWLDLPENYDEEEFARILTAAEKIKSDSEVLVVIGIGGSYLGAKAAIDFLNHHFANLQTAKERKAPQILYAGNSISSTYLADLVEYVQDKEFSVNVISKSGTTTEPAIAFRVFKELLVKKYGQEEASKRIYATTDKVKGAVKVEADANNWETFVVPDNVGGRFSVLTAVGLLPIAASGADITALMEGANAARKDLSSDKISENIAYQYAAVRNLLYRKGYITEILANYEPSLQYFGEWWKQLAGESEGKDQKGIYPTSANFSTDLHSLGQFIQEGYRNLFETVIRVDNPRKNVIIPELAEDLDGLGYLQGKDVDFVNKKATDGVLLAHTDGGVPNMFVTLPAQDEFTLGYTIYFFELAIAVSGYMNAVNPFDQPGVEAYKRNMFALLGKPGFEALSAELNARL.

The active-site Proton donor is the Glu291. Catalysis depends on residues His312 and Lys426.

The protein belongs to the GPI family.

It localises to the cytoplasm. The enzyme catalyses alpha-D-glucose 6-phosphate = beta-D-fructose 6-phosphate. It participates in carbohydrate biosynthesis; gluconeogenesis. It functions in the pathway carbohydrate degradation; glycolysis; D-glyceraldehyde 3-phosphate and glycerone phosphate from D-glucose: step 2/4. Functionally, catalyzes the reversible isomerization of glucose-6-phosphate to fructose-6-phosphate. In Streptococcus pyogenes serotype M3 (strain ATCC BAA-595 / MGAS315), this protein is Glucose-6-phosphate isomerase.